A 1080-amino-acid chain; its full sequence is Histone-lysine N-methyltransferase, H3 lysine-4 specific (1080 aa).

3 disordered regions span residues Met-1–Asn-46, Asn-54–Ser-73, and Tyr-78–Ser-121. A binds SWD2 region spans residues Met-1–Ile-230. Polar residues predominate over residues Ser-11–Gly-28. Residues His-29 to Asn-46 show a composition bias toward low complexity. A compositionally biased stretch (basic and acidic residues) spans Asn-54–His-67. Composition is skewed to polar residues over residues Tyr-78–Pro-87 and Arg-99–Ser-121. A binds RNA region spans residues Ile-230 to Leu-569. Residues Lys-356–Leu-569 form a binds SHG1 region. Ser-625 is modified (phosphoserine). The tract at residues Ala-646–Asp-729 is disordered. Residues Asp-674 to Ala-692 show a composition bias toward acidic residues. Residues Pro-693 to His-712 show a composition bias toward basic and acidic residues. The interval Met-762–Lys-938 is binds SPP1. Positions Met-762–Lys-938 are contributes to RNA binding. Residues Met-762–Lys-938 are required for catalytic activity. A Phosphothreonine modification is found at Thr-875. Basic and acidic residues-rich tracts occupy residues Glu-877–Ser-890 and Ser-899–Arg-909. The interval Glu-877–Arg-909 is disordered. Positions Arg-904–Arg-909 match the RxxxRR motif motif. Positions Lys-938–Lys-1055 constitute an SET domain. Residue Tyr-1054 participates in S-adenosyl-L-methionine binding. In terms of domain architecture, Post-SET spans Glu-1064–Asn-1080.

The protein belongs to the class V-like SAM-binding methyltransferase superfamily. In terms of assembly, component of the Set1C/COMPASS complex which consists of SET1(2), BRE2(2), SPP1(2), SDC1(1), SHG1(1), SWD1(1), SWD2(1), and SWD3(1). Interacts with MEC3.

The protein localises to the nucleus. It localises to the chromosome. It catalyses the reaction L-lysyl(4)-[histone H3] + 3 S-adenosyl-L-methionine = N(6),N(6),N(6)-trimethyl-L-lysyl(4)-[histone H3] + 3 S-adenosyl-L-homocysteine + 3 H(+). The catalysed reaction is N(6)-methyl-L-lysyl(4)-[histone H3] + S-adenosyl-L-methionine = N(6),N(6)-dimethyl-L-lysyl(4)-[histone H3] + S-adenosyl-L-homocysteine + H(+). The enzyme catalyses N(6),N(6)-dimethyl-L-lysyl(4)-[histone H3] + S-adenosyl-L-methionine = N(6),N(6),N(6)-trimethyl-L-lysyl(4)-[histone H3] + S-adenosyl-L-homocysteine + H(+). In terms of biological role, catalytic component of the COMPASS (Set1C) complex that specifically mono-, di- and trimethylates histone H3 to form H3K4me1/2/3. Binds RNAs involved in chromosome segregation, splicing and transcriptional regulation; appears to bind transcripts both co- and post-transcriptionally and binding might negatively affect its histone methyltransferase activity. COMPASS recognizes ubiquitinated H2B on one face of the nucleosome which stimulates the methylation of H3 on the opposing face. Plays a role in telomere length maintenance and transcription elongation regulation. The polypeptide is Histone-lysine N-methyltransferase, H3 lysine-4 specific (Saccharomyces cerevisiae (strain ATCC 204508 / S288c) (Baker's yeast)).